Reading from the N-terminus, the 210-residue chain is ATP phosphoribosyltransferase (210 aa).

Belongs to the ATP phosphoribosyltransferase family. Short subfamily. In terms of assembly, heteromultimer composed of HisG and HisZ subunits.

The protein resides in the cytoplasm. It carries out the reaction 1-(5-phospho-beta-D-ribosyl)-ATP + diphosphate = 5-phospho-alpha-D-ribose 1-diphosphate + ATP. It functions in the pathway amino-acid biosynthesis; L-histidine biosynthesis; L-histidine from 5-phospho-alpha-D-ribose 1-diphosphate: step 1/9. In terms of biological role, catalyzes the condensation of ATP and 5-phosphoribose 1-diphosphate to form N'-(5'-phosphoribosyl)-ATP (PR-ATP). Has a crucial role in the pathway because the rate of histidine biosynthesis seems to be controlled primarily by regulation of HisG enzymatic activity. This chain is ATP phosphoribosyltransferase, found in Bacillus cytotoxicus (strain DSM 22905 / CIP 110041 / 391-98 / NVH 391-98).